Here is a 95-residue protein sequence, read N- to C-terminus: Putative septation protein SpoVG (95 aa).

Belongs to the SpoVG family.

Functionally, could be involved in septation. In Brevibacillus brevis (strain 47 / JCM 6285 / NBRC 100599), this protein is Putative septation protein SpoVG.